Consider the following 482-residue polypeptide: MSVIQELHRQLVRKERSATEITQAYLDRIAQVEPTLHSFLTVTRDRALAQAAEVDKRLAAGEEIGLLTGIPLAIKDNLCTYGVRTTCASKMLEHFVPPYESTVTEKLQAAGAIMVGKTNLDEFAMGSSTENSAFGFTANPWNPERVSGGSSGGSAAAVAARECAAALGSDTGGSIRQPAAFCGVVGLKPTYGLVSRYGLVAYASSLDQIGPLAPTVTDAAILLGAIAGHDPKDATSLRVPIPDYTQALKPDLKGMRIGLIQETVGEGVQPEVKSALEAALKTLEALGATLVELSCPRFAYGLPTYYIIAPSEASANLARYDGVNFGFRAEGASDLLEMYMKTRAQGFGAEVKRRIMIGTYALSAGYYDAYYLRAQKVRTLIKEDFARAFEQVDVLICPTAPTTAFKAGEKTADPLSMYLSDLMTIPVNLAGLPGLSVPCGFDSNGLPIGLQLIGNVLQEATLFHVAYAYEQTTPWHQQQPQL.

Catalysis depends on charge relay system residues Lys75 and Ser150. The active-site Acyl-ester intermediate is the Ser174.

This sequence belongs to the amidase family. GatA subfamily. As to quaternary structure, heterotrimer of A, B and C subunits.

It catalyses the reaction L-glutamyl-tRNA(Gln) + L-glutamine + ATP + H2O = L-glutaminyl-tRNA(Gln) + L-glutamate + ADP + phosphate + H(+). Its function is as follows. Allows the formation of correctly charged Gln-tRNA(Gln) through the transamidation of misacylated Glu-tRNA(Gln) in organisms which lack glutaminyl-tRNA synthetase. The reaction takes place in the presence of glutamine and ATP through an activated gamma-phospho-Glu-tRNA(Gln). The chain is Glutamyl-tRNA(Gln) amidotransferase subunit A from Thermosynechococcus vestitus (strain NIES-2133 / IAM M-273 / BP-1).